The chain runs to 360 residues: Dihydroorotate dehydrogenase (quinone) (360 aa).

FMN-binding positions include 60-64 (AGFDK) and Thr-84. Residue Lys-64 coordinates substrate. Substrate is bound at residue 109-113 (NRMGF). FMN is bound by residues Asn-137 and Asn-168. Asn-168 contacts substrate. The Nucleophile role is filled by Ser-171. Position 173 (Asn-173) interacts with substrate. FMN contacts are provided by Lys-213 and Ser-241. 242-243 (NT) provides a ligand contact to substrate. FMN-binding positions include Gly-264, Gly-293, and 314 to 315 (YS).

This sequence belongs to the dihydroorotate dehydrogenase family. Type 2 subfamily. In terms of assembly, monomer. FMN is required as a cofactor.

The protein resides in the cell membrane. The enzyme catalyses (S)-dihydroorotate + a quinone = orotate + a quinol. It functions in the pathway pyrimidine metabolism; UMP biosynthesis via de novo pathway; orotate from (S)-dihydroorotate (quinone route): step 1/1. Functionally, catalyzes the conversion of dihydroorotate to orotate with quinone as electron acceptor. The protein is Dihydroorotate dehydrogenase (quinone) of Bartonella tribocorum (strain CIP 105476 / IBS 506).